We begin with the raw amino-acid sequence, 198 residues long: Peptidyl-tRNA hydrolase (198 aa).

Position 15 (tyrosine 15) interacts with tRNA. Catalysis depends on histidine 20, which acts as the Proton acceptor. Residues phenylalanine 66, asparagine 68, and asparagine 114 each contribute to the tRNA site.

The protein belongs to the PTH family. In terms of assembly, monomer.

The protein localises to the cytoplasm. It catalyses the reaction an N-acyl-L-alpha-aminoacyl-tRNA + H2O = an N-acyl-L-amino acid + a tRNA + H(+). In terms of biological role, hydrolyzes ribosome-free peptidyl-tRNAs (with 1 or more amino acids incorporated), which drop off the ribosome during protein synthesis, or as a result of ribosome stalling. Catalyzes the release of premature peptidyl moieties from peptidyl-tRNA molecules trapped in stalled 50S ribosomal subunits, and thus maintains levels of free tRNAs and 50S ribosomes. The polypeptide is Peptidyl-tRNA hydrolase (Cupriavidus taiwanensis (strain DSM 17343 / BCRC 17206 / CCUG 44338 / CIP 107171 / LMG 19424 / R1) (Ralstonia taiwanensis (strain LMG 19424))).